The following is a 121-amino-acid chain: Immunoglobulin kappa variable 2-40 (121 aa).

The N-terminal stretch at 1-19 (MRLPAQLLGLLMLWVPGSS) is a signal peptide. In terms of domain architecture, Ig-like spans 20 to 121 (EDIVMTQTPL…YYCMQRIEFP (102 aa)). Residues 21 to 43 (DIVMTQTPLSLPVTPGEPASISC) form a framework-1 region. Cys-43 and Cys-114 are disulfide-bonded. A complementarity-determining-1 region spans residues 44 to 60 (RSSQSLLDSDDGNTYLD). Positions 61–75 (WYLQKPGQSPQLLIY) are framework-2. Positions 76-82 (TLSYRAS) are complementarity-determining-2. Residues 83-114 (GVPDRFSGSGSGTDFTLKISRVEAEDVGVYYC) are framework-3. The tract at residues 115 to 121 (MQRIEFP) is complementarity-determining-3.

Immunoglobulins are composed of two identical heavy chains and two identical light chains; disulfide-linked.

Its subcellular location is the secreted. It localises to the cell membrane. Functionally, v region of the variable domain of immunoglobulin light chains that participates in the antigen recognition. Immunoglobulins, also known as antibodies, are membrane-bound or secreted glycoproteins produced by B lymphocytes. In the recognition phase of humoral immunity, the membrane-bound immunoglobulins serve as receptors which, upon binding of a specific antigen, trigger the clonal expansion and differentiation of B lymphocytes into immunoglobulins-secreting plasma cells. Secreted immunoglobulins mediate the effector phase of humoral immunity, which results in the elimination of bound antigens. The antigen binding site is formed by the variable domain of one heavy chain, together with that of its associated light chain. Thus, each immunoglobulin has two antigen binding sites with remarkable affinity for a particular antigen. The variable domains are assembled by a process called V-(D)-J rearrangement and can then be subjected to somatic hypermutations which, after exposure to antigen and selection, allow affinity maturation for a particular antigen. The polypeptide is Immunoglobulin kappa variable 2-40 (Homo sapiens (Human)).